The chain runs to 273 residues: DnaJ homolog subfamily C member 27 (273 aa).

The segment at Met-1–Lys-18 is required for interaction with MAPK1. GTP contacts are provided by residues Gly-23–Ser-30, Asp-71–Asp-75, and Asn-134–Asp-137. The J domain occupies Asp-217 to Lys-273.

This sequence belongs to the small GTPase superfamily. Rab family. Interacts directly with MAPK1 (wild-type and kinase-deficient forms). Interacts directly (in GTP-bound form) with MAP2K1 (wild-type and kinase-deficient forms).

The protein localises to the nucleus. Its function is as follows. GTPase which can activate the MEK/ERK pathway and induce cell transformation when overexpressed. May act as a nuclear scaffold for MAPK1, probably by association with MAPK1 nuclear export signal leading to enhanced ERK1/ERK2 signaling. This Bos taurus (Bovine) protein is DnaJ homolog subfamily C member 27 (DNAJC27).